An 895-amino-acid chain; its full sequence is Zyg eleven-related protein 1 (895 aa).

Disordered regions lie at residues 58–78 and 195–221; these read HGPA…PDQG and RGQM…SDHQ. The span at 205-220 shows a compositional bias: low complexity; the sequence is SPLSPSSQPSSIQSDH.

In terms of assembly, interacts with elc-1. Part of an E3 ubiquitin ligase complex including zer-11, cul-2 and elc-1.

Acts as a target recruitment subunit in the E3 ubiquitin ligase complex zer-1-cul-2-elc-1. The chain is Zyg eleven-related protein 1 (zer-1) from Caenorhabditis elegans.